Consider the following 1296-residue polypeptide: Phosphoribosylformylglycinamidine synthase (1296 aa).

Residues 304 to 323 (WPGAATGSGGEIRDEGATGR) form a disordered region. ATP-binding positions include 306 to 317 (GAATGSGGEIRD) and A677. Mg(2+) is bound by residues D678, E717, N721, and D885. ATP is bound at residue S887. A compositionally biased stretch (basic and acidic residues) spans 1000–1013 (PDCADQEHQAKQDE). Residues 1000–1019 (PDCADQEHQAKQDESDPGLN) are disordered. One can recognise a Glutamine amidotransferase type-1 domain in the interval 1043-1296 (VAVLREQGVN…MFRNARKQLG (254 aa)). C1136 functions as the Nucleophile in the catalytic mechanism. Active-site residues include H1261 and E1263.

In the N-terminal section; belongs to the FGAMS family. As to quaternary structure, monomer.

It localises to the cytoplasm. It catalyses the reaction N(2)-formyl-N(1)-(5-phospho-beta-D-ribosyl)glycinamide + L-glutamine + ATP + H2O = 2-formamido-N(1)-(5-O-phospho-beta-D-ribosyl)acetamidine + L-glutamate + ADP + phosphate + H(+). The protein operates within purine metabolism; IMP biosynthesis via de novo pathway; 5-amino-1-(5-phospho-D-ribosyl)imidazole from N(2)-formyl-N(1)-(5-phospho-D-ribosyl)glycinamide: step 1/2. In terms of biological role, phosphoribosylformylglycinamidine synthase involved in the purines biosynthetic pathway. Catalyzes the ATP-dependent conversion of formylglycinamide ribonucleotide (FGAR) and glutamine to yield formylglycinamidine ribonucleotide (FGAM) and glutamate. This is Phosphoribosylformylglycinamidine synthase from Yersinia pestis bv. Antiqua (strain Nepal516).